Consider the following 444-residue polypeptide: Phosphoribosylamine--glycine ligase (444 aa).

The ATP-grasp domain occupies 109–324; it reads RNLFKKYEID…FLDVCFAIAE (216 aa). ATP is bound at residue 140–202; the sequence is MTSLGKDVVV…EEKLVGVEFT (63 aa). Positions 282, 294, and 296 each coordinate Mg(2+). 3 residues coordinate Mn(2+): Q282, E294, and N296.

The protein belongs to the GARS family. Requires Mg(2+) as cofactor. Mn(2+) is required as a cofactor.

The catalysed reaction is 5-phospho-beta-D-ribosylamine + glycine + ATP = N(1)-(5-phospho-beta-D-ribosyl)glycinamide + ADP + phosphate + H(+). Its pathway is purine metabolism; IMP biosynthesis via de novo pathway; N(1)-(5-phospho-D-ribosyl)glycinamide from 5-phospho-alpha-D-ribose 1-diphosphate: step 2/2. This Methanococcus maripaludis (strain C7 / ATCC BAA-1331) protein is Phosphoribosylamine--glycine ligase.